The primary structure comprises 142 residues: Large ribosomal subunit protein uL13 (142 aa).

Belongs to the universal ribosomal protein uL13 family. In terms of assembly, part of the 50S ribosomal subunit.

Its function is as follows. This protein is one of the early assembly proteins of the 50S ribosomal subunit, although it is not seen to bind rRNA by itself. It is important during the early stages of 50S assembly. In Pectobacterium atrosepticum (strain SCRI 1043 / ATCC BAA-672) (Erwinia carotovora subsp. atroseptica), this protein is Large ribosomal subunit protein uL13.